Reading from the N-terminus, the 330-residue chain is Polyprenyl transferase ausN (330 aa).

5 consecutive transmembrane segments (helical) span residues 116–136, 165–185, 189–209, 238–258, and 260–280; these read AATI…LFLP, LILI…GMEP, ILSM…IDLV, AYSL…LGGL, and VPFV…FLRA.

This sequence belongs to the UbiA prenyltransferase family. Requires Mg(2+) as cofactor.

Its subcellular location is the membrane. It carries out the reaction 3,5-dimethylorsellinate + (2E,6E)-farnesyl diphosphate = (3R)-3-farnesyl-6-hydroxy-2,3,5-trimethyl-4-oxocyclohexa-1,5-diene-1-carboxylate + diphosphate + H(+). The protein operates within secondary metabolite biosynthesis; terpenoid biosynthesis. Functionally, polyprenyl transferase; part of the gene cluster B that mediates the biosynthesis of austinol and dehydroaustinol, two fungal meroterpenoids. The first step of the pathway is the synthesis of 3,5-dimethylorsellinic acid by the polyketide synthase ausA. 3,5-dimethylorsellinic acid is then prenylated by the polyprenyl transferase ausN. Further epoxidation by the FAD-dependent monooxygenase ausM and cyclization by the probable terpene cyclase ausL lead to the formation of protoaustinoid A. Protoaustinoid A is then oxidized to spiro-lactone preaustinoid A3 by the combined action of the FAD-binding monooxygenases ausB and ausC, and the dioxygenase ausE. Acid-catalyzed keto-rearrangement and ring contraction of the tetraketide portion of preaustinoid A3 by ausJ lead to the formation of preaustinoid A4. The aldo-keto reductase ausK, with the help of ausH, is involved in the next step by transforming preaustinoid A4 into isoaustinone which is in turn hydroxylated by the P450 monooxygenase ausI to form austinolide. Finally, the cytochrome P450 monooxygenase ausG modifies austinolide to austinol. Austinol can be further modified to dehydroaustinol which forms a diffusible complex with diorcinol that initiates conidiation. Due to genetic rearrangements of the clusters and the subsequent loss of some enzymes, the end products of the Emericella nidulans austinoid biosynthesis clusters are austinol and dehydroaustinol, even if additional enzymes, such as the O-acetyltransferase ausQ and the cytochrome P450 monooxygenase ausR are still functional. This Emericella nidulans (strain FGSC A4 / ATCC 38163 / CBS 112.46 / NRRL 194 / M139) (Aspergillus nidulans) protein is Polyprenyl transferase ausN.